The sequence spans 371 residues: Phospho-N-acetylmuramoyl-pentapeptide-transferase (371 aa).

The next 10 helical transmembrane spans lie at 25-45, 79-99, 104-124, 139-159, 179-199, 210-230, 247-267, 274-294, 299-319, and 348-368; these read YLTF…VAMG, TMGG…FADL, VWVV…DDYA, KLIA…IFAP, LVIN…AGFS, GLAI…AYLV, VGEL…FLWY, IFMG…IAVC, LVLG…MIQV, and TVVI…LATL.

Belongs to the glycosyltransferase 4 family. MraY subfamily. It depends on Mg(2+) as a cofactor.

It localises to the cell inner membrane. The enzyme catalyses UDP-N-acetyl-alpha-D-muramoyl-L-alanyl-gamma-D-glutamyl-meso-2,6-diaminopimeloyl-D-alanyl-D-alanine + di-trans,octa-cis-undecaprenyl phosphate = di-trans,octa-cis-undecaprenyl diphospho-N-acetyl-alpha-D-muramoyl-L-alanyl-D-glutamyl-meso-2,6-diaminopimeloyl-D-alanyl-D-alanine + UMP. It functions in the pathway cell wall biogenesis; peptidoglycan biosynthesis. Functionally, catalyzes the initial step of the lipid cycle reactions in the biosynthesis of the cell wall peptidoglycan: transfers peptidoglycan precursor phospho-MurNAc-pentapeptide from UDP-MurNAc-pentapeptide onto the lipid carrier undecaprenyl phosphate, yielding undecaprenyl-pyrophosphoryl-MurNAc-pentapeptide, known as lipid I. In Caulobacter sp. (strain K31), this protein is Phospho-N-acetylmuramoyl-pentapeptide-transferase.